The sequence spans 105 residues: Guanyl-specific ribonuclease U1 (105 aa).

Position 1 is a pyrrolidone carboxylic acid (Gln1). 2 cysteine pairs are disulfide-bonded: Cys8–Cys103 and Cys51–Cys87. The active site involves His37. Glu57 functions as the Proton acceptor in the catalytic mechanism. His92 (proton donor) is an active-site residue.

The protein belongs to the ribonuclease N1/T1 family.

The enzyme catalyses [RNA] containing guanosine + H2O = an [RNA fragment]-3'-guanosine-3'-phosphate + a 5'-hydroxy-ribonucleotide-3'-[RNA fragment].. The chain is Guanyl-specific ribonuclease U1 from Ustilago sphaerogena (Smut fungus).